Reading from the N-terminus, the 896-residue chain is Probable DNA-directed RNA polymerase (896 aa).

Catalysis depends on residues D546, K617, and D798.

This sequence belongs to the phage and mitochondrial RNA polymerase family.

The protein resides in the mitochondrion. It carries out the reaction RNA(n) + a ribonucleoside 5'-triphosphate = RNA(n+1) + diphosphate. DNA-dependent RNA polymerase catalyzes the transcription of DNA into RNA using the four ribonucleoside triphosphates as substrates. This is Probable DNA-directed RNA polymerase from Neurospora crassa.